The sequence spans 304 residues: UDP-N-acetylenolpyruvoylglucosamine reductase (304 aa).

Positions 33 to 198 (RVGGPVDILL…ITATFCFESG (166 aa)) constitute an FAD-binding PCMH-type domain. Arginine 177 is an active-site residue. Serine 227 serves as the catalytic Proton donor. Residue glutamate 297 is part of the active site.

The protein belongs to the MurB family. Requires FAD as cofactor.

The protein resides in the cytoplasm. The enzyme catalyses UDP-N-acetyl-alpha-D-muramate + NADP(+) = UDP-N-acetyl-3-O-(1-carboxyvinyl)-alpha-D-glucosamine + NADPH + H(+). Its pathway is cell wall biogenesis; peptidoglycan biosynthesis. Cell wall formation. In Clostridium botulinum (strain Alaska E43 / Type E3), this protein is UDP-N-acetylenolpyruvoylglucosamine reductase.